The chain runs to 121 residues: Large ribosomal subunit protein uL22 (121 aa).

It belongs to the universal ribosomal protein uL22 family. Part of the 50S ribosomal subunit.

In terms of biological role, this protein binds specifically to 23S rRNA; its binding is stimulated by other ribosomal proteins, e.g. L4, L17, and L20. It is important during the early stages of 50S assembly. It makes multiple contacts with different domains of the 23S rRNA in the assembled 50S subunit and ribosome. The globular domain of the protein is located near the polypeptide exit tunnel on the outside of the subunit, while an extended beta-hairpin is found that lines the wall of the exit tunnel in the center of the 70S ribosome. The sequence is that of Large ribosomal subunit protein uL22 from Salinibacter ruber (strain DSM 13855 / M31).